A 488-amino-acid chain; its full sequence is Cysteine--tRNA ligase (488 aa).

Cys-40 contributes to the Zn(2+) binding site. Positions 42 to 52 match the 'HIGH' region motif; that stretch reads MTVYDYCHIGH. Residues Cys-221, His-246, and Glu-250 each coordinate Zn(2+). The 'KMSKS' region signature appears at 278-282; sequence KMSKS. Residue Lys-281 coordinates ATP.

This sequence belongs to the class-I aminoacyl-tRNA synthetase family. In terms of assembly, monomer. Requires Zn(2+) as cofactor.

The protein localises to the cytoplasm. It carries out the reaction tRNA(Cys) + L-cysteine + ATP = L-cysteinyl-tRNA(Cys) + AMP + diphosphate. The polypeptide is Cysteine--tRNA ligase (Psychrobacter cryohalolentis (strain ATCC BAA-1226 / DSM 17306 / VKM B-2378 / K5)).